Reading from the N-terminus, the 531-residue chain is Peptide chain release factor 3 (531 aa).

The region spanning 13-282 is the tr-type G domain; the sequence is AKRRTFAIIS…TLIKYSPPPK (270 aa). GTP-binding positions include 22–29, 90–94, and 144–147; these read SHPDAGKT, DTPGH, and NKLD.

The protein belongs to the TRAFAC class translation factor GTPase superfamily. Classic translation factor GTPase family. PrfC subfamily.

Its subcellular location is the cytoplasm. In terms of biological role, increases the formation of ribosomal termination complexes and stimulates activities of RF-1 and RF-2. It binds guanine nucleotides and has strong preference for UGA stop codons. It may interact directly with the ribosome. The stimulation of RF-1 and RF-2 is significantly reduced by GTP and GDP, but not by GMP. This Psychrobacter arcticus (strain DSM 17307 / VKM B-2377 / 273-4) protein is Peptide chain release factor 3.